The primary structure comprises 156 residues: Small ribosomal subunit protein uS7 (156 aa).

Belongs to the universal ribosomal protein uS7 family. Part of the 30S ribosomal subunit. Contacts proteins S9 and S11.

One of the primary rRNA binding proteins, it binds directly to 16S rRNA where it nucleates assembly of the head domain of the 30S subunit. Is located at the subunit interface close to the decoding center, probably blocks exit of the E-site tRNA. This is Small ribosomal subunit protein uS7 from Acinetobacter baumannii (strain AB307-0294).